Reading from the N-terminus, the 453-residue chain is Omega-3 fatty acid desaturase, chloroplastic (453 aa).

A Histidine box-1 motif is present at residues 171–175; sequence HDCGH. The Histidine box-2 signature appears at 207 to 211; the sequence is HRTHH. The Histidine box-3 motif lies at 374–378; sequence HVIHH.

This sequence belongs to the fatty acid desaturase type 1 family.

It is found in the plastid. The protein resides in the chloroplast membrane. The protein operates within lipid metabolism; polyunsaturated fatty acid biosynthesis. In terms of biological role, chloroplast omega-3 fatty acid desaturase introduces the third double bond in the biosynthesis of 16:3 and 18:3 fatty acids, important constituents of plant membranes. It is thought to use ferredoxin as an electron donor and to act on fatty acids esterified to galactolipids, sulfolipids and phosphatidylglycerol. This Glycine max (Soybean) protein is Omega-3 fatty acid desaturase, chloroplastic (FAD7).